A 117-amino-acid polypeptide reads, in one-letter code: Large ribosomal subunit protein bL20 (117 aa).

This sequence belongs to the bacterial ribosomal protein bL20 family.

Binds directly to 23S ribosomal RNA and is necessary for the in vitro assembly process of the 50S ribosomal subunit. It is not involved in the protein synthesizing functions of that subunit. This is Large ribosomal subunit protein bL20 from Rickettsia felis (strain ATCC VR-1525 / URRWXCal2) (Rickettsia azadi).